The primary structure comprises 974 residues: Probable proton ATPase 1B (974 aa).

Basic and acidic residues predominate over residues 1 to 23 (MSSKKYELDAAAFEDKPESHSDA). The disordered stretch occupies residues 1 to 61 (MSSKKYELDA…ATDLLPPSKG (61 aa)). The next 4 helical transmembrane spans lie at 93-112 (GLWG…EFAL), 118-137 (GAIL…YETI), 265-286 (VMLA…YLLA), and 295-321 (ALQF…TLAV). Asp351 acts as the 4-aspartylphosphate intermediate in catalysis. The next 6 membrane-spanning stretches (helical) occupy residues 631–651 (AAAD…AMLV), 662–684 (FLTY…CFSL), 698–712 (FFHL…ITLL), 738–761 (VVFV…LWIG), 813–840 (FFFY…AASF), and 869–887 (VWIY…KVLA). The disordered stretch occupies residues 952–974 (REDTHVLNESTSPVNAFSPKVKK).

It belongs to the cation transport ATPase (P-type) (TC 3.A.3) family. Type IIIA subfamily.

The protein localises to the membrane. The catalysed reaction is ATP + H2O + H(+)(in) = ADP + phosphate + 2 H(+)(out). This Leishmania donovani protein is Probable proton ATPase 1B (H1B).